The sequence spans 185 residues: Elongation factor P (185 aa).

The protein belongs to the elongation factor P family.

Its subcellular location is the cytoplasm. It participates in protein biosynthesis; polypeptide chain elongation. Functionally, involved in peptide bond synthesis. Stimulates efficient translation and peptide-bond synthesis on native or reconstituted 70S ribosomes in vitro. Probably functions indirectly by altering the affinity of the ribosome for aminoacyl-tRNA, thus increasing their reactivity as acceptors for peptidyl transferase. This Acetivibrio thermocellus (strain ATCC 27405 / DSM 1237 / JCM 9322 / NBRC 103400 / NCIMB 10682 / NRRL B-4536 / VPI 7372) (Clostridium thermocellum) protein is Elongation factor P.